The primary structure comprises 291 residues: Glycine--tRNA ligase alpha subunit (291 aa).

The protein belongs to the class-II aminoacyl-tRNA synthetase family. In terms of assembly, tetramer of two alpha and two beta subunits.

It localises to the cytoplasm. It carries out the reaction tRNA(Gly) + glycine + ATP = glycyl-tRNA(Gly) + AMP + diphosphate. The polypeptide is Glycine--tRNA ligase alpha subunit (Geotalea uraniireducens (strain Rf4) (Geobacter uraniireducens)).